Reading from the N-terminus, the 607-residue chain is Elongation factor 4 (607 aa).

The 183-residue stretch at 11–193 folds into the tr-type G domain; it reads EKIRNFSIIA…QIVEKVPAPT (183 aa). Residues 23–28 and 140–143 contribute to the GTP site; these read DHGKST and NKID.

Belongs to the TRAFAC class translation factor GTPase superfamily. Classic translation factor GTPase family. LepA subfamily.

The protein resides in the cell membrane. It carries out the reaction GTP + H2O = GDP + phosphate + H(+). Functionally, required for accurate and efficient protein synthesis under certain stress conditions. May act as a fidelity factor of the translation reaction, by catalyzing a one-codon backward translocation of tRNAs on improperly translocated ribosomes. Back-translocation proceeds from a post-translocation (POST) complex to a pre-translocation (PRE) complex, thus giving elongation factor G a second chance to translocate the tRNAs correctly. Binds to ribosomes in a GTP-dependent manner. In Streptococcus pneumoniae serotype 19F (strain G54), this protein is Elongation factor 4.